The chain runs to 489 residues: Kynureninase 2 (489 aa).

Residues 1–12 show a composition bias toward polar residues; the sequence is MDASAAISQLRQ. The interval 1 to 25 is disordered; sequence MDASAAISQLRQGQKPEWPQNANTS. Residues Leu-149, Thr-150, 177 to 180, Asp-261, His-264, and Tyr-286 each bind pyridoxal 5'-phosphate; that span reads FPSD. Position 287 is an N6-(pyridoxal phosphate)lysine (Lys-287). Residues Trp-317 and Asn-345 each contribute to the pyridoxal 5'-phosphate site.

This sequence belongs to the kynureninase family. In terms of assembly, homodimer. Pyridoxal 5'-phosphate serves as cofactor.

It localises to the cytoplasm. The catalysed reaction is L-kynurenine + H2O = anthranilate + L-alanine + H(+). It carries out the reaction 3-hydroxy-L-kynurenine + H2O = 3-hydroxyanthranilate + L-alanine + H(+). It functions in the pathway amino-acid degradation; L-kynurenine degradation; L-alanine and anthranilate from L-kynurenine: step 1/1. The protein operates within cofactor biosynthesis; NAD(+) biosynthesis; quinolinate from L-kynurenine: step 2/3. Its function is as follows. Catalyzes the cleavage of L-kynurenine (L-Kyn) and L-3-hydroxykynurenine (L-3OHKyn) into anthranilic acid (AA) and 3-hydroxyanthranilic acid (3-OHAA), respectively. In Phaeosphaeria nodorum (strain SN15 / ATCC MYA-4574 / FGSC 10173) (Glume blotch fungus), this protein is Kynureninase 2.